The primary structure comprises 1500 residues: Host cell factor (1500 aa).

Kelch repeat units lie at residues 85–133, 135–181, 189–237, 259–307, and 308–373; these read LMVV…VEGT, MFVF…RLGH, KIFL…TYGD, NLLI…MIGN, and KMYV…GIQS. Residue serine 477 is modified to Phosphoserine. Positions 517–528 are enriched in polar residues; that stretch reads LLQSMSQPSSPA. Positions 517–543 are disordered; that stretch reads LLQSMSQPSSPASRADKDPLSSGGGTT. Phosphoserine is present on residues serine 958 and serine 966. The disordered stretch occupies residues 1024 to 1061; that stretch reads SEGQHGSEENENNGENATSSSASALFTGGDTAGPSRAQ. A compositionally biased stretch (low complexity) spans 1036-1047; sequence NGENATSSSASA. Position 1126 is a phosphothreonine (threonine 1126). The tract at residues 1161-1185 is disordered; that stretch reads IGSLKENQDENKKFKQRQESSPSQN. Over residues 1166 to 1178 the composition is skewed to basic and acidic residues; it reads ENQDENKKFKQRQ. 2 Fibronectin type-III domains span residues 1244–1341 and 1346–1457; these read VQST…TCLP and APSA…DPAA. The segment at 1458-1500 is disordered; the sequence is AKQHTPTVTPNLKRGPEKSTIGSSNIANTFCSPHKRGRNGLHD. The Bipartite nuclear localization signal motif lies at 1470-1495; it reads KRGPEKSTIGSSNIANTFCSPHKRGR. Over residues 1477–1488 the composition is skewed to polar residues; it reads TIGSSNIANTFC. The residue at position 1489 (serine 1489) is a Phosphoserine. The segment covering 1490–1500 has biased composition (basic residues); sequence PHKRGRNGLHD.

In terms of assembly, core component of several methyltransferase-containing complexes. Component of the SET1 complex, composed at least of the catalytic subunit Set1, wds/WDR5, Wdr82, Rbbp5, ash2, Cfp1/CXXC1, hcf and Dpy-30L1. Component of the MLL3/4 complex composed at least of the catalytic subunit trr, ash2, Rbbp5, Dpy-30L1, wds, hcf, ptip, Pa1, Utx, Lpt and Ncoa6. Component of the Ada2a-containing (ATAC) complex composed of at least Ada2a, Atac1, Hcf, Ada3, Gcn5, Mocs2B, Charac-14, Atac3, Atac2, NC2beta and wds. Post-translationally, proteolytic cleavage occurs between amino acids 900 and 1100 within the non-conserved central region, giving rise to two independent but tightly associated N- and C-terminal subunits.

It is found in the nucleus. May be involved in control of the cell cycle. This chain is Host cell factor, found in Drosophila melanogaster (Fruit fly).